Reading from the N-terminus, the 92-residue chain is Large ribosomal subunit protein bL27 (92 aa).

The tract at residues 1–26 (MAHKKGASSSSNGRDSESKRLGVKRF) is disordered.

The protein belongs to the bacterial ribosomal protein bL27 family.

The chain is Large ribosomal subunit protein bL27 from Corynebacterium aurimucosum (strain ATCC 700975 / DSM 44827 / CIP 107346 / CN-1) (Corynebacterium nigricans).